A 194-amino-acid polypeptide reads, in one-letter code: MMQAKSNIILASASPRRVELLSSAGIEFEVVAGDVDEGLLSGETPEDHVVRLARAKAEDVARKSGGRFYIGADTIVVCEGEIMGKPKDSADAERMLNKLSGIPHEVVTGFAVYDKERDGVITDAVRTRVYFKHLRDEEIRAYIATGCPFDKAGAYAIQGGAAYMVQKIEGSYSNVVGLPLCEVVDALRRMGAIE.

Asp-73 functions as the Proton acceptor in the catalytic mechanism.

This sequence belongs to the Maf family. YhdE subfamily. The cofactor is a divalent metal cation.

The protein localises to the cytoplasm. The catalysed reaction is dTTP + H2O = dTMP + diphosphate + H(+). It carries out the reaction UTP + H2O = UMP + diphosphate + H(+). Nucleoside triphosphate pyrophosphatase that hydrolyzes dTTP and UTP. May have a dual role in cell division arrest and in preventing the incorporation of modified nucleotides into cellular nucleic acids. The chain is dTTP/UTP pyrophosphatase from Geotalea uraniireducens (strain Rf4) (Geobacter uraniireducens).